The sequence spans 505 residues: Mannosylglucosyl-3-phosphoglycerate synthase (505 aa).

As to quaternary structure, monomer in solution.

The enzyme catalyses (2R)-2-O-(alpha-D-glucopyranosyl)-3-phospho-glycerate + GDP-alpha-D-mannose = (2R)-2-O-[alpha-D-mannopyranosyl-(1-&gt;2)-alpha-D-glucopyranosyl]-3-phospho-glycerate + GDP + H(+). Its activity is regulated as follows. Not strictly dependent on divalent cations, but the presence of Mn(2+), Ca(2+), Mg(2+) or Co(2+) stimulates activity. Involved in the biosynthesis of the compatible solute mannosylglucosylglycerate through a phosphorylating pathway. Catalyzes the conversion of glucosyl-3-phosphoglycerate (GPG) to mannosylglucosyl-3-phosphoglycerate (MGPG). In Petrotoga mobilis (strain DSM 10674 / SJ95), this protein is Mannosylglucosyl-3-phosphoglycerate synthase.